The primary structure comprises 270 residues: 3-methyl-2-oxobutanoate hydroxymethyltransferase (270 aa).

2 residues coordinate Mg(2+): Asp41 and Asp80. Residues 41–42, Asp80, and Lys109 each bind 3-methyl-2-oxobutanoate; that span reads DS. Glu111 contacts Mg(2+). Glu178 serves as the catalytic Proton acceptor.

The protein belongs to the PanB family. In terms of assembly, homodecamer; pentamer of dimers. Mg(2+) is required as a cofactor.

The protein localises to the cytoplasm. It carries out the reaction 3-methyl-2-oxobutanoate + (6R)-5,10-methylene-5,6,7,8-tetrahydrofolate + H2O = 2-dehydropantoate + (6S)-5,6,7,8-tetrahydrofolate. Its pathway is cofactor biosynthesis; (R)-pantothenate biosynthesis; (R)-pantoate from 3-methyl-2-oxobutanoate: step 1/2. Catalyzes the reversible reaction in which hydroxymethyl group from 5,10-methylenetetrahydrofolate is transferred onto alpha-ketoisovalerate to form ketopantoate. The polypeptide is 3-methyl-2-oxobutanoate hydroxymethyltransferase (Thermotoga maritima (strain ATCC 43589 / DSM 3109 / JCM 10099 / NBRC 100826 / MSB8)).